The sequence spans 466 residues: 3-isopropylmalate dehydratase large subunit (466 aa).

Positions 347, 407, and 410 each coordinate [4Fe-4S] cluster.

This sequence belongs to the aconitase/IPM isomerase family. LeuC type 1 subfamily. As to quaternary structure, heterodimer of LeuC and LeuD. Requires [4Fe-4S] cluster as cofactor.

The catalysed reaction is (2R,3S)-3-isopropylmalate = (2S)-2-isopropylmalate. It functions in the pathway amino-acid biosynthesis; L-leucine biosynthesis; L-leucine from 3-methyl-2-oxobutanoate: step 2/4. In terms of biological role, catalyzes the isomerization between 2-isopropylmalate and 3-isopropylmalate, via the formation of 2-isopropylmaleate. The sequence is that of 3-isopropylmalate dehydratase large subunit from Escherichia coli O157:H7.